The following is a 136-amino-acid chain: UPF0310 protein HH_1062 (136 aa).

This sequence belongs to the UPF0310 family.

This chain is UPF0310 protein HH_1062, found in Helicobacter hepaticus (strain ATCC 51449 / 3B1).